The primary structure comprises 337 residues: Sorting nexin-15 (337 aa).

The 130-residue stretch at M1–R130 folds into the PX domain. R51, S53, R87, and R96 together coordinate a 1,2-diacyl-sn-glycero-3-phospho-(1D-myo-inositol-3-phosphate). R105 carries the post-translational modification Omega-N-methylarginine. The tract at residues E133 to L156 is disordered. The span at L141–P151 shows a compositional bias: pro residues. 2 positions are modified to phosphoserine: S201 and S227. Residues L244–G270 form a disordered region. A compositionally biased stretch (acidic residues) spans G253 to E263. In terms of domain architecture, MIT spans A265–P337.

It belongs to the sorting nexin family. As to quaternary structure, homodimer. Interacts with SNX1, SNX2 and SNX4.

It localises to the cytoplasm. The protein resides in the membrane. Its subcellular location is the cytoplasmic vesicle membrane. Functionally, may be involved in several stages of intracellular trafficking. Overexpression of SNX15 disrupts the normal trafficking of proteins from the plasma membrane to recycling endosomes or the TGN. The polypeptide is Sorting nexin-15 (Snx15) (Mus musculus (Mouse)).